We begin with the raw amino-acid sequence, 148 residues long: UPF0260 protein Maqu_1608 (148 aa).

The protein belongs to the UPF0260 family.

In Marinobacter nauticus (strain ATCC 700491 / DSM 11845 / VT8) (Marinobacter aquaeolei), this protein is UPF0260 protein Maqu_1608.